Here is a 387-residue protein sequence, read N- to C-terminus: MKNVVIVDCIRTPMGRSKNGVFRHTRAEDLSAHLMKGLLERNPNVDPNQIEDIYWGCVQQTLEQGFNIARNASLLAGLPKSIAATTVNRLCGSSMQALHDASRAIMVGDADICIIGGVEHMGHVPMNHGVDFHSGLSKNVAKASGMMGLTAEMLGKMHGISREQQDAFAFASHQKAHRATIEGHFDSEILPMEGHDENGALTLVKHDEVIRPETTLEGLAALRPAFDPANGTVTAGSSSALSDGASAMLIMSEEKANELGLTIRAKIRSMAVSGCDPAIMGYGPVPATKKALKRAGLSIDDIDLFELNEAFAAQSLPCIKDLGLFDVMEEKINLNGGAIALGHPLGCSGSRIATTLINNMERTGAKLGVATMCIGLGQGIATVFERP.

Cys-91 serves as the catalytic Acyl-thioester intermediate. Active-site proton acceptor residues include His-343 and Cys-373.

This sequence belongs to the thiolase-like superfamily. Thiolase family. In terms of assembly, heterotetramer of two alpha chains (FadB) and two beta chains (FadA).

It is found in the cytoplasm. It catalyses the reaction an acyl-CoA + acetyl-CoA = a 3-oxoacyl-CoA + CoA. It functions in the pathway lipid metabolism; fatty acid beta-oxidation. In terms of biological role, catalyzes the final step of fatty acid oxidation in which acetyl-CoA is released and the CoA ester of a fatty acid two carbons shorter is formed. This Aliivibrio salmonicida (strain LFI1238) (Vibrio salmonicida (strain LFI1238)) protein is 3-ketoacyl-CoA thiolase.